The chain runs to 200 residues: Probable fatty acid desaturase MIMI_L630 (200 aa).

The next 2 helical transmembrane spans lie at 9–29 (FIQI…YHWI) and 79–99 (IGPL…FIMI).

It belongs to the fatty acid desaturase CarF family.

The protein localises to the membrane. The chain is Probable fatty acid desaturase MIMI_L630 from Acanthamoeba polyphaga mimivirus (APMV).